Here is a 417-residue protein sequence, read N- to C-terminus: MTNQNPPVLLEQNHAKQAFVGLQMLFVAFGALVLVPLITGLNANTALLTAGIGTLLFQLCTGRQVPIFLASSFAFIAPIQYGVTTWGIATTMGGLVFTGLVYFALSTLVKIKGAGALQKVFPPVVVGPVIIIIGMGLAPVAVDMALGKNSTYQYNDAVFVSMATLLTTLGVAVFAKGMMKLIPIMFGIVVGYILCLFLGLINFQPVIDAPWFSVPEITTPEFKLEAILYLLPIAIAPAVEHVGGIMAISSVTGKDFLQKPGLHRTLLGDGIATSAASFLGGPPNTTYAEVTGAVMLTRNFNPKIMTWAAVWAIAISFCGKVGAFLSTIPTIVMGGIMMLVFGSIAVVGMSTLIRGKVDVTEARNLCIISVVMTFGIGGMFVNFGEVSLKGISLCAVVAILLNLILPKAKNTPIEENR.

Over methionine 1–asparagine 13 the chain is Cytoplasmic. Residues histidine 14–leucine 37 form a helical membrane-spanning segment. The Periplasmic portion of the chain corresponds to isoleucine 38–leucine 41. A helical membrane pass occupies residues asparagine 42–threonine 61. Residues glycine 62–glutamine 64 lie on the Cytoplasmic side of the membrane. The discontinuously helical transmembrane segment at valine 65–tyrosine 81 threads the bilayer. A uracil-binding site is contributed by phenylalanine 73. Topologically, residues valine 83–threonine 90 are periplasmic. A helical transmembrane segment spans residues threonine 91 to isoleucine 111. Residues lysine 112–proline 123 are Cytoplasmic-facing. A helical membrane pass occupies residues valine 124–alanine 145. The Periplasmic portion of the chain corresponds to leucine 146–tyrosine 154. The chain crosses the membrane as a helical span at residues asparagine 155–glycine 170. Over valine 171–glycine 177 the chain is Cytoplasmic. Residues methionine 178 to leucine 198 traverse the membrane as a helical segment. Residues glycine 199–lysine 223 are Periplasmic-facing. The helical transmembrane segment at leucine 224–alanine 247 threads the bilayer. Glutamate 240 contributes to the uracil binding site. Residues isoleucine 248–proline 260 lie on the Cytoplasmic side of the membrane. A helical transmembrane segment spans residues glycine 261–glycine 280. The chain crosses the membrane as a discontinuously helical span at residues glycine 281–threonine 297. Uracil is bound at residue glutamate 289. Residues arginine 298–phenylalanine 300 lie on the Cytoplasmic side of the membrane. The chain crosses the membrane as a helical span at residues asparagine 301–cysteine 318. The Periplasmic portion of the chain corresponds to glycine 319 to isoleucine 331. A helical transmembrane segment spans residues valine 332–isoleucine 353. At arginine 354–asparagine 364 the chain is on the cytoplasmic side. An intramembrane region (discontinuously helical) is located at residues leucine 365 to leucine 400. At leucine 401 to asparagine 416 the chain is on the cytoplasmic side.

It belongs to the nucleobase:cation symporter-2 (NCS2) (TC 2.A.40) family.

The protein localises to the cell inner membrane. The enzyme catalyses uracil(in) + H(+)(in) = uracil(out) + H(+)(out). Transport of uracil in the cell. This chain is Probable uracil permease (uraA), found in Pasteurella multocida (strain Pm70).